We begin with the raw amino-acid sequence, 311 residues long: tRNA(Ile)-lysidine synthase (311 aa).

32-37 (SGGPDS) contributes to the ATP binding site.

Belongs to the tRNA(Ile)-lysidine synthase family.

The protein localises to the cytoplasm. It catalyses the reaction cytidine(34) in tRNA(Ile2) + L-lysine + ATP = lysidine(34) in tRNA(Ile2) + AMP + diphosphate + H(+). Its function is as follows. Ligates lysine onto the cytidine present at position 34 of the AUA codon-specific tRNA(Ile) that contains the anticodon CAU, in an ATP-dependent manner. Cytidine is converted to lysidine, thus changing the amino acid specificity of the tRNA from methionine to isoleucine. The polypeptide is tRNA(Ile)-lysidine synthase (Cutibacterium acnes (strain DSM 16379 / KPA171202) (Propionibacterium acnes)).